A 188-amino-acid polypeptide reads, in one-letter code: GMP synthase [glutamine-hydrolyzing] subunit A (188 aa).

Positions 2 to 188 (KVAVIYFGGQ…FKNFIKICRK (187 aa)) constitute a Glutamine amidotransferase type-1 domain. Cys79 functions as the Nucleophile in the catalytic mechanism. Residues His166 and Glu168 contribute to the active site.

In terms of assembly, heterodimer composed of a glutamine amidotransferase subunit (A) and a GMP-binding subunit (B).

The enzyme catalyses XMP + L-glutamine + ATP + H2O = GMP + L-glutamate + AMP + diphosphate + 2 H(+). The protein operates within purine metabolism; GMP biosynthesis; GMP from XMP (L-Gln route): step 1/1. Catalyzes the synthesis of GMP from XMP. The chain is GMP synthase [glutamine-hydrolyzing] subunit A from Sulfolobus acidocaldarius (strain ATCC 33909 / DSM 639 / JCM 8929 / NBRC 15157 / NCIMB 11770).